A 251-amino-acid chain; its full sequence is MLLIPAIDLKDGQCVRLKQGEMDDATVFSEDPAAMARHWIKQGARRLHLVDLNGAFAGKPKNGGAIRAITDEVGDDIPVQLGGGIRDLDTIEHYLDNGISYVIIGTAAVKNPGFLHDACGAFPGHIIVGLDAKDGKVAVDGWSKMTGHDVVDLAKKFEDYGVEAVIYTDIGRDGMLSGVNIEATVRLARALRIPVIASGGIASLTDIEALCAVEDEGIMGAITGRAIYEGTLDLSAAQSRADALRAPGGAA.

The Proton acceptor role is filled by D8. The active-site Proton donor is D131.

It belongs to the HisA/HisF family.

It is found in the cytoplasm. It carries out the reaction 1-(5-phospho-beta-D-ribosyl)-5-[(5-phospho-beta-D-ribosylamino)methylideneamino]imidazole-4-carboxamide = 5-[(5-phospho-1-deoxy-D-ribulos-1-ylimino)methylamino]-1-(5-phospho-beta-D-ribosyl)imidazole-4-carboxamide. The protein operates within amino-acid biosynthesis; L-histidine biosynthesis; L-histidine from 5-phospho-alpha-D-ribose 1-diphosphate: step 4/9. This Azoarcus sp. (strain BH72) protein is 1-(5-phosphoribosyl)-5-[(5-phosphoribosylamino)methylideneamino] imidazole-4-carboxamide isomerase.